Reading from the N-terminus, the 201-residue chain is Small ribosomal subunit protein uS4c (201 aa).

The segment at 20 to 44 (GLTSKRPRAGSDLRNQSRSGKKSQY) is disordered. Residues 89 to 152 (MRLDNTLFRL…NSRTLVQNLL (64 aa)) form the S4 RNA-binding domain.

This sequence belongs to the universal ribosomal protein uS4 family. As to quaternary structure, part of the 30S ribosomal subunit. Contacts protein S5. The interaction surface between S4 and S5 is involved in control of translational fidelity.

It is found in the plastid. It localises to the chloroplast. In terms of biological role, one of the primary rRNA binding proteins, it binds directly to 16S rRNA where it nucleates assembly of the body of the 30S subunit. With S5 and S12 plays an important role in translational accuracy. The protein is Small ribosomal subunit protein uS4c (rps4) of Aethionema grandiflorum (Persian stone-cress).